The following is a 160-amino-acid chain: Large ribosomal subunit protein uL30m (160 aa).

A mitochondrion-targeting transit peptide spans 1-34 (MAGVLRSVFQRPPGRLQTVKKGAESLIGTEWIRH). Residues 45–64 (VFQPRPEDHEKYGGDPQNPH) form a disordered region.

The protein belongs to the universal ribosomal protein uL30 family. In terms of assembly, component of the mitochondrial ribosome large subunit (39S) which comprises a 16S rRNA and about 50 distinct proteins.

The protein localises to the mitochondrion. This chain is Large ribosomal subunit protein uL30m (Mrpl30), found in Rattus norvegicus (Rat).